The following is a 467-amino-acid chain: Dihydroorotase (467 aa).

2 residues coordinate Zn(2+): H60 and H62. Residues 62–64 (HFR) and N94 each bind substrate. Zn(2+) contacts are provided by E146, H180, H234, and D313. D313 is an active-site residue. H317 serves as a coordination point for substrate. The interval 439–467 (KPGRGEFLEGSGKRSEEDEEENSEETGSD) is disordered. Positions 441-454 (GRGEFLEGSGKRSE) are enriched in basic and acidic residues. A compositionally biased stretch (acidic residues) spans 455–467 (EDEEENSEETGSD).

This sequence belongs to the metallo-dependent hydrolases superfamily. DHOase family. Class I DHOase subfamily. Zn(2+) is required as a cofactor.

It carries out the reaction (S)-dihydroorotate + H2O = N-carbamoyl-L-aspartate + H(+). It functions in the pathway pyrimidine metabolism; UMP biosynthesis via de novo pathway; (S)-dihydroorotate from bicarbonate: step 3/3. Catalyzes the reversible cyclization of carbamoyl aspartate to dihydroorotate. The sequence is that of Dihydroorotase from Methanosarcina acetivorans (strain ATCC 35395 / DSM 2834 / JCM 12185 / C2A).